The sequence spans 403 residues: TPR repeat-containing protein Synpcc7942_0270 (403 aa).

5 TPR repeats span residues 208–243 (AYLCSKLGGLLVQEGDLKAAQRWLKQGLKQGRPEPA), 244–282 (VRYELLYHLALLERRQGDLDAAIDRYQAALQEPVDAIHK), 283–316 (LGAWVNLSHLYRDRGQLGLAYDAARQAVAAAPQA), 317–350 (TVALTALGLAARAIGNYPEAIAAYQQALQLDPND), and 351–387 (PSLYQNLGAVLFQVGQLEASYAAFRQAIAGYEQQGSP).

This is TPR repeat-containing protein Synpcc7942_0270 from Synechococcus elongatus (strain ATCC 33912 / PCC 7942 / FACHB-805) (Anacystis nidulans R2).